A 554-amino-acid polypeptide reads, in one-letter code: 2-succinyl-5-enolpyruvyl-6-hydroxy-3-cyclohexene-1-carboxylate synthase (554 aa).

Belongs to the TPP enzyme family. MenD subfamily. As to quaternary structure, homodimer. The cofactor is Mg(2+). It depends on Mn(2+) as a cofactor. Thiamine diphosphate serves as cofactor.

It catalyses the reaction isochorismate + 2-oxoglutarate + H(+) = 5-enolpyruvoyl-6-hydroxy-2-succinyl-cyclohex-3-ene-1-carboxylate + CO2. The protein operates within quinol/quinone metabolism; 1,4-dihydroxy-2-naphthoate biosynthesis; 1,4-dihydroxy-2-naphthoate from chorismate: step 2/7. It participates in quinol/quinone metabolism; menaquinone biosynthesis. Catalyzes the thiamine diphosphate-dependent decarboxylation of 2-oxoglutarate and the subsequent addition of the resulting succinic semialdehyde-thiamine pyrophosphate anion to isochorismate to yield 2-succinyl-5-enolpyruvyl-6-hydroxy-3-cyclohexene-1-carboxylate (SEPHCHC). The protein is 2-succinyl-5-enolpyruvyl-6-hydroxy-3-cyclohexene-1-carboxylate synthase of Flavobacterium johnsoniae (strain ATCC 17061 / DSM 2064 / JCM 8514 / BCRC 14874 / CCUG 350202 / NBRC 14942 / NCIMB 11054 / UW101) (Cytophaga johnsonae).